The primary structure comprises 121 residues: Large ribosomal subunit protein uL14 (121 aa).

Belongs to the universal ribosomal protein uL14 family. Part of the 50S ribosomal subunit. Forms a cluster with proteins L3 and L19. In the 70S ribosome, L14 and L19 interact and together make contacts with the 16S rRNA in bridges B5 and B8.

Functionally, binds to 23S rRNA. Forms part of two intersubunit bridges in the 70S ribosome. The polypeptide is Large ribosomal subunit protein uL14 (Legionella pneumophila (strain Paris)).